Reading from the N-terminus, the 255-residue chain is MSKEFLPTILEQKEQEVEAMSYEELQPLRSTYSLYEYLKSQSQELQLIAEVKKASPSLGDINLAVDIVEQARTYERCGAAMISVLTDEIFFKGHLDYLREISSQVSIPTLNKDFIIDEKQIVRARNAGATIILLIVAALSEKRLQELYDFATGLGLEVLVETHNLAELETAHRIGARIIGVNNRNLVTFETDINTSLQLSAHFKDDRVYVSESAIFSKEDAEQVAPYFHAILVGTALMQAEDVAEKIKELKIDKG.

This sequence belongs to the TrpC family.

The catalysed reaction is 1-(2-carboxyphenylamino)-1-deoxy-D-ribulose 5-phosphate + H(+) = (1S,2R)-1-C-(indol-3-yl)glycerol 3-phosphate + CO2 + H2O. It functions in the pathway amino-acid biosynthesis; L-tryptophan biosynthesis; L-tryptophan from chorismate: step 4/5. The chain is Indole-3-glycerol phosphate synthase from Streptococcus gordonii (strain Challis / ATCC 35105 / BCRC 15272 / CH1 / DL1 / V288).